Consider the following 437-residue polypeptide: GTPase Der (437 aa).

2 consecutive EngA-type G domains span residues 3 to 167 (NLVA…NKET) and 176 to 352 (PRFA…ENRT). GTP is bound by residues 9–16 (GRPNVGKS), 56–60 (DTGGW), 119–122 (NKTD), 182–189 (GRPNAGKS), 229–233 (DTAGI), and 294–297 (NKWD). The region spanning 353–437 (TKIPTARLNE…TPINIYIRQK (85 aa)) is the KH-like domain.

Belongs to the TRAFAC class TrmE-Era-EngA-EngB-Septin-like GTPase superfamily. EngA (Der) GTPase family. As to quaternary structure, associates with the 50S ribosomal subunit.

Its function is as follows. GTPase that plays an essential role in the late steps of ribosome biogenesis. The polypeptide is GTPase Der (Bacteroides thetaiotaomicron (strain ATCC 29148 / DSM 2079 / JCM 5827 / CCUG 10774 / NCTC 10582 / VPI-5482 / E50)).